The chain runs to 511 residues: Bifunctional purine biosynthesis protein PurH (511 aa).

Positions 1-147 constitute an MGS-like domain; the sequence is MIQIKRALIS…KNYKHTLVLT (147 aa).

It belongs to the PurH family.

It catalyses the reaction (6R)-10-formyltetrahydrofolate + 5-amino-1-(5-phospho-beta-D-ribosyl)imidazole-4-carboxamide = 5-formamido-1-(5-phospho-D-ribosyl)imidazole-4-carboxamide + (6S)-5,6,7,8-tetrahydrofolate. The enzyme catalyses IMP + H2O = 5-formamido-1-(5-phospho-D-ribosyl)imidazole-4-carboxamide. Its pathway is purine metabolism; IMP biosynthesis via de novo pathway; 5-formamido-1-(5-phospho-D-ribosyl)imidazole-4-carboxamide from 5-amino-1-(5-phospho-D-ribosyl)imidazole-4-carboxamide (10-formyl THF route): step 1/1. The protein operates within purine metabolism; IMP biosynthesis via de novo pathway; IMP from 5-formamido-1-(5-phospho-D-ribosyl)imidazole-4-carboxamide: step 1/1. This is Bifunctional purine biosynthesis protein PurH from Leptospira interrogans serogroup Icterohaemorrhagiae serovar Lai (strain 56601).